A 185-amino-acid polypeptide reads, in one-letter code: Large ribosomal subunit protein uL5 (185 aa).

It belongs to the universal ribosomal protein uL5 family. As to quaternary structure, part of the 50S ribosomal subunit; part of the 5S rRNA/L5/L18/L25 subcomplex. Contacts the 5S rRNA and the P site tRNA. Forms a bridge to the 30S subunit in the 70S ribosome.

Functionally, this is one of the proteins that bind and probably mediate the attachment of the 5S RNA into the large ribosomal subunit, where it forms part of the central protuberance. In the 70S ribosome it contacts protein S13 of the 30S subunit (bridge B1b), connecting the 2 subunits; this bridge is implicated in subunit movement. Contacts the P site tRNA; the 5S rRNA and some of its associated proteins might help stabilize positioning of ribosome-bound tRNAs. This Brucella abortus (strain 2308) protein is Large ribosomal subunit protein uL5.